The primary structure comprises 436 residues: 3-ketoacyl-CoA thiolase (436 aa).

Cys99 serves as the catalytic Acyl-thioester intermediate. Active-site proton acceptor residues include His392 and Cys422.

It belongs to the thiolase-like superfamily. Thiolase family. In terms of assembly, heterotetramer of two alpha chains (FadJ) and two beta chains (FadI).

The protein localises to the cytoplasm. It catalyses the reaction an acyl-CoA + acetyl-CoA = a 3-oxoacyl-CoA + CoA. The protein operates within lipid metabolism; fatty acid beta-oxidation. In terms of biological role, catalyzes the final step of fatty acid oxidation in which acetyl-CoA is released and the CoA ester of a fatty acid two carbons shorter is formed. In Pseudoalteromonas atlantica (strain T6c / ATCC BAA-1087), this protein is 3-ketoacyl-CoA thiolase.